The primary structure comprises 207 residues: MSDAPLCAEGLECIRGDRLLFSGLNLTLSPGQLLQVEGANGAGKTSLLRVLAGLSRPAEGEVRWRGLDIQHHRASYFTEMVYMGHAPGLKAELSPLENLRVSVALRGRMADEARIDDALARVGLRGFEDVPARGLSAGQKQRTALCRLLLDPVPLWILDEPFTALDVRGIALVRELLEFHLANGGMALMTSHHALDVRGDCRSLNLS.

In terms of domain architecture, ABC transporter spans 6 to 207 (LCAEGLECIR…RGDCRSLNLS (202 aa)). 38–45 (GANGAGKT) contacts ATP.

The protein belongs to the ABC transporter superfamily. CcmA exporter (TC 3.A.1.107) family. As to quaternary structure, the complex is composed of two ATP-binding proteins (CcmA) and two transmembrane proteins (CcmB).

The protein localises to the cell inner membrane. It catalyses the reaction heme b(in) + ATP + H2O = heme b(out) + ADP + phosphate + H(+). In terms of biological role, part of the ABC transporter complex CcmAB involved in the biogenesis of c-type cytochromes; once thought to export heme, this seems not to be the case, but its exact role is uncertain. Responsible for energy coupling to the transport system. This Methylococcus capsulatus (strain ATCC 33009 / NCIMB 11132 / Bath) protein is Cytochrome c biogenesis ATP-binding export protein CcmA.